The chain runs to 279 residues: Undecaprenyl-diphosphatase (279 aa).

The next 8 helical transmembrane spans lie at 2–22, 44–64, 85–105, 113–133, 163–183, 188–208, 225–245, and 255–275; these read LFIELLKAIFFGVIEGVTEWL, AFMEMFNIVIQLGAIIAVIVI, WQLWLKVAIACIPSIIIAVPL, FNHMLPIAIALIVYGIAFLWI, VLSIIPGTSRSGATILGAIIL, TVAADFTFFLAIPTMFGYSGL, LLVLLVASLTAFAVSLYVIKL, and FTVFGRYRIVLGSLLIVYSVF.

Belongs to the UppP family.

It localises to the cell membrane. The catalysed reaction is di-trans,octa-cis-undecaprenyl diphosphate + H2O = di-trans,octa-cis-undecaprenyl phosphate + phosphate + H(+). Functionally, catalyzes the dephosphorylation of undecaprenyl diphosphate (UPP). Confers resistance to bacitracin. This Streptococcus equi subsp. equi (strain 4047) protein is Undecaprenyl-diphosphatase.